Here is a 496-residue protein sequence, read N- to C-terminus: Probable malate:quinone oxidoreductase (496 aa).

It belongs to the MQO family. FAD is required as a cofactor.

The catalysed reaction is (S)-malate + a quinone = a quinol + oxaloacetate. Its pathway is carbohydrate metabolism; tricarboxylic acid cycle; oxaloacetate from (S)-malate (quinone route): step 1/1. The polypeptide is Probable malate:quinone oxidoreductase (Prochlorococcus marinus (strain MIT 9313)).